Reading from the N-terminus, the 245-residue chain is Octanoyltransferase (245 aa).

Positions 54-242 (QNAPEQVWLL…AFEQIFGPTI (189 aa)) constitute a BPL/LPL catalytic domain. Residues 93–100 (RGGEFTYH), 173–175 (AIG), and 186–188 (GVS) each bind substrate. The Acyl-thioester intermediate role is filled by C204.

This sequence belongs to the LipB family.

Its subcellular location is the cytoplasm. The catalysed reaction is octanoyl-[ACP] + L-lysyl-[protein] = N(6)-octanoyl-L-lysyl-[protein] + holo-[ACP] + H(+). The protein operates within protein modification; protein lipoylation via endogenous pathway; protein N(6)-(lipoyl)lysine from octanoyl-[acyl-carrier-protein]: step 1/2. Its function is as follows. Catalyzes the transfer of endogenously produced octanoic acid from octanoyl-acyl-carrier-protein onto the lipoyl domains of lipoate-dependent enzymes. Lipoyl-ACP can also act as a substrate although octanoyl-ACP is likely to be the physiological substrate. The chain is Octanoyltransferase from Bartonella quintana (strain Toulouse) (Rochalimaea quintana).